The primary structure comprises 151 residues: Small ribosomal subunit protein uS15 (151 aa).

Residues 1–20 (MARLHSGKRGSSGSTRPLRT) form a disordered region.

It belongs to the universal ribosomal protein uS15 family. Part of the 30S ribosomal subunit.

This chain is Small ribosomal subunit protein uS15, found in Methanococcus maripaludis (strain C7 / ATCC BAA-1331).